A 785-amino-acid chain; its full sequence is Solute carrier family 45 member 4 (785 aa).

The tract at residues 1–43 (MKMAPQNADSESMQVQELPVPLPDPQKPRDPEAETQEETTSEG) is disordered. A run of 6 helical transmembrane segments spans residues 64-84 (EFCY…IGLP), 87-107 (YYSL…PLIG), 124-144 (ILAL…GSAI), 156-176 (PIGI…ADAT), 197-217 (LNIH…LGGL), and 234-254 (VLFF…LFSI). Disordered stretches follow at residues 259-309 (YSPQ…VQSE) and 401-430 (KVPN…SGSM). Residues Ser442 and Ser472 each carry the phosphoserine modification. A disordered region spans residues 478–505 (DLQQRQRSRHRNQSGATASSGDTESEEG). A compositionally biased stretch (low complexity) spans 490–499 (QSGATASSGD). At Ser502 the chain carries Phosphoserine. 6 consecutive transmembrane segments (helical) span residues 525–545 (LMWL…EAVF), 577–597 (MGCW…ALLQ), 609–629 (IIYM…AMFP), 631–651 (VYVA…ISYC), 683–703 (ILSC…GGVV), and 709–729 (IVVI…TATF). The tract at residues 741–772 (KEEQKGLSSGPAGEGEGGAGSEKPTVLKLSRK) is disordered. Residue Ser749 is modified to Phosphoserine.

This sequence belongs to the glycoside-pentoside-hexuronide (GPH) cation symporter transporter (TC 2.A.2) family. Ubiquitously expressed.

It is found in the membrane. The enzyme catalyses sucrose(out) + H(+)(out) = sucrose(in) + H(+)(in). In terms of biological role, proton-associated sucrose transporter. May be able to transport also glucose and fructose. The sequence is that of Solute carrier family 45 member 4 (Slc45a4) from Mus musculus (Mouse).